Here is a 151-residue protein sequence, read N- to C-terminus: UPF0208 membrane protein CKO_00500 (151 aa).

The next 2 membrane-spanning stretches (helical) occupy residues 46–65 (YAIRFMPPIAVFTLCWQIAL) and 69–91 (LGPAVATALFALSLPMQGMWWLG).

It belongs to the UPF0208 family.

The protein resides in the cell inner membrane. This is UPF0208 membrane protein CKO_00500 from Citrobacter koseri (strain ATCC BAA-895 / CDC 4225-83 / SGSC4696).